A 234-amino-acid chain; its full sequence is Ubiquitin thioesterase OTUB2 (234 aa).

Residues 40–231 (TAIRKTKGDG…TSHYNILYAA (192 aa)) form the OTU domain. Residue D48 is part of the active site. C51 (nucleophile) is an active-site residue. The active site involves H224.

Belongs to the peptidase C65 family. As to expression, widely expressed. Expressed at higher level in brain.

The catalysed reaction is Thiol-dependent hydrolysis of ester, thioester, amide, peptide and isopeptide bonds formed by the C-terminal Gly of ubiquitin (a 76-residue protein attached to proteins as an intracellular targeting signal).. Functionally, hydrolase that can remove conjugated ubiquitin from proteins in vitro and may therefore play an important regulatory role at the level of protein turnover by preventing degradation. Mediates deubiquitination of 'Lys-11'-,'Lys-48'- and 'Lys-63'-linked polyubiquitin chains, with a preference for 'Lys-63'-linked polyubiquitin chains. The chain is Ubiquitin thioesterase OTUB2 (OTUB2) from Homo sapiens (Human).